A 158-amino-acid chain; its full sequence is MGVEGLLEKGFVTTSADKVINWARTGSMWPMTFGLACCAVEMMQAGAARYDLDRFGIIFRPSPRQSDVMIVAGTLCNKMAPALRKVYDQMPEPRWVISMGSCANGGGYYHYSYSVVRGCDRVVPVDVYVPGCPPTAEALIWGIMQLQKKIRTTNTIAR.

Positions 37, 38, 102, and 132 each coordinate [4Fe-4S] cluster.

The protein belongs to the complex I 20 kDa subunit family. As to quaternary structure, NDH-1 is composed of 14 different subunits. Subunits NuoB, C, D, E, F, and G constitute the peripheral sector of the complex. It depends on [4Fe-4S] cluster as a cofactor.

It is found in the cell inner membrane. The catalysed reaction is a quinone + NADH + 5 H(+)(in) = a quinol + NAD(+) + 4 H(+)(out). Its function is as follows. NDH-1 shuttles electrons from NADH, via FMN and iron-sulfur (Fe-S) centers, to quinones in the respiratory chain. Couples the redox reaction to proton translocation (for every two electrons transferred, four hydrogen ions are translocated across the cytoplasmic membrane), and thus conserves the redox energy in a proton gradient. The chain is NADH-quinone oxidoreductase subunit B from Alkalilimnicola ehrlichii (strain ATCC BAA-1101 / DSM 17681 / MLHE-1).